Reading from the N-terminus, the 157-residue chain is 6,7-dimethyl-8-ribityllumazine synthase (157 aa).

5-amino-6-(D-ribitylamino)uracil contacts are provided by residues Phe-26, 60 to 62, and 86 to 88; these read ALE and AVI. 91-92 contributes to the (2S)-2-hydroxy-3-oxobutyl phosphate binding site; that stretch reads ET. His-94 acts as the Proton donor in catalysis. Asn-119 contributes to the 5-amino-6-(D-ribitylamino)uracil binding site. Arg-133 is a (2S)-2-hydroxy-3-oxobutyl phosphate binding site.

The protein belongs to the DMRL synthase family.

It carries out the reaction (2S)-2-hydroxy-3-oxobutyl phosphate + 5-amino-6-(D-ribitylamino)uracil = 6,7-dimethyl-8-(1-D-ribityl)lumazine + phosphate + 2 H2O + H(+). It participates in cofactor biosynthesis; riboflavin biosynthesis; riboflavin from 2-hydroxy-3-oxobutyl phosphate and 5-amino-6-(D-ribitylamino)uracil: step 1/2. Functionally, catalyzes the formation of 6,7-dimethyl-8-ribityllumazine by condensation of 5-amino-6-(D-ribitylamino)uracil with 3,4-dihydroxy-2-butanone 4-phosphate. This is the penultimate step in the biosynthesis of riboflavin. The polypeptide is 6,7-dimethyl-8-ribityllumazine synthase (Laribacter hongkongensis (strain HLHK9)).